The sequence spans 65 residues: uncharacterized protein (65 aa).

This is an uncharacterized protein from Archaeoglobus fulgidus (strain ATCC 49558 / DSM 4304 / JCM 9628 / NBRC 100126 / VC-16).